The primary structure comprises 203 residues: Recombination protein RecR (203 aa).

The segment at 56-71 (CAVCGNVSDEERCRIC) adopts a C4-type zinc-finger fold. Residues 79-179 (SLICVVEEPK…TVTRIASGLP (101 aa)) form the Toprim domain.

The protein belongs to the RecR family.

Its function is as follows. May play a role in DNA repair. It seems to be involved in an RecBC-independent recombinational process of DNA repair. It may act with RecF and RecO. This Mycolicibacterium vanbaalenii (strain DSM 7251 / JCM 13017 / BCRC 16820 / KCTC 9966 / NRRL B-24157 / PYR-1) (Mycobacterium vanbaalenii) protein is Recombination protein RecR.